We begin with the raw amino-acid sequence, 528 residues long: Phosphoenolpyruvate carboxykinase (ATP) (528 aa).

Residues arginine 56, tyrosine 192, and lysine 198 each contribute to the substrate site. ATP is bound by residues lysine 198, histidine 217, and 233-241 (GLSGTGKTT). Mn(2+) contacts are provided by lysine 198 and histidine 217. Aspartate 254 is a Mn(2+) binding site. ATP is bound by residues glutamate 282, arginine 319, and threonine 444. Arginine 319 contacts substrate.

The protein belongs to the phosphoenolpyruvate carboxykinase (ATP) family. Mn(2+) serves as cofactor.

It is found in the cytoplasm. It catalyses the reaction oxaloacetate + ATP = phosphoenolpyruvate + ADP + CO2. The protein operates within carbohydrate biosynthesis; gluconeogenesis. In terms of biological role, involved in the gluconeogenesis. Catalyzes the conversion of oxaloacetate (OAA) to phosphoenolpyruvate (PEP) through direct phosphoryl transfer between the nucleoside triphosphate and OAA. In Bacillus mycoides (strain KBAB4) (Bacillus weihenstephanensis), this protein is Phosphoenolpyruvate carboxykinase (ATP).